Consider the following 93-residue polypeptide: Phosphoribosyl-ATP pyrophosphatase (93 aa).

The protein belongs to the PRA-PH family.

Its subcellular location is the cytoplasm. The enzyme catalyses 1-(5-phospho-beta-D-ribosyl)-ATP + H2O = 1-(5-phospho-beta-D-ribosyl)-5'-AMP + diphosphate + H(+). It functions in the pathway amino-acid biosynthesis; L-histidine biosynthesis; L-histidine from 5-phospho-alpha-D-ribose 1-diphosphate: step 2/9. In Metallosphaera sedula (strain ATCC 51363 / DSM 5348 / JCM 9185 / NBRC 15509 / TH2), this protein is Phosphoribosyl-ATP pyrophosphatase.